Consider the following 217-residue polypeptide: Lipid A acyltransferase PagP (217 aa).

Positions 1-24 (MYLKRILITLSLITLPIVPCLSYA) are cleaved as a signal peptide. Active-site residues include H89, D132, and S133.

The protein belongs to the lipid A palmitoyltransferase family. Homodimer.

Its subcellular location is the cell outer membrane. The catalysed reaction is a lipid A + a 1,2-diacyl-sn-glycero-3-phosphocholine = a hepta-acyl lipid A + a 2-acyl-sn-glycero-3-phosphocholine. It carries out the reaction a lipid IVA + a 1,2-diacyl-sn-glycero-3-phosphocholine = a lipid IVB + a 2-acyl-sn-glycero-3-phosphocholine. The enzyme catalyses a lipid IIA + a 1,2-diacyl-sn-glycero-3-phosphocholine = a lipid IIB + a 2-acyl-sn-glycero-3-phosphocholine. Transfers a fatty acid residue from the sn-1 position of a phospholipid to the N-linked hydroxyfatty acid chain on the proximal unit of lipid A or its precursors. The protein is Lipid A acyltransferase PagP of Pectobacterium atrosepticum (strain SCRI 1043 / ATCC BAA-672) (Erwinia carotovora subsp. atroseptica).